The following is a 356-amino-acid chain: 5-amino-6-(D-ribitylamino)uracil--L-tyrosine 4-hydroxyphenyl transferase (356 aa).

Residues 47–281 enclose the Radical SAM core domain; sequence VTYIVNRNIN…AIARILLNTH (235 aa). Residues Cys-61, Cys-65, and Cys-68 each contribute to the [4Fe-4S] cluster site.

The protein belongs to the radical SAM superfamily. CofH family. As to quaternary structure, consists of two subunits, CofG and CofH. It depends on [4Fe-4S] cluster as a cofactor.

It carries out the reaction 5-amino-6-(D-ribitylamino)uracil + L-tyrosine + S-adenosyl-L-methionine = 5-amino-5-(4-hydroxybenzyl)-6-(D-ribitylimino)-5,6-dihydrouracil + 2-iminoacetate + 5'-deoxyadenosine + L-methionine + H(+). Its pathway is cofactor biosynthesis; coenzyme F0 biosynthesis. Its function is as follows. Catalyzes the radical-mediated synthesis of 5-amino-5-(4-hydroxybenzyl)-6-(D-ribitylimino)-5,6-dihydrouracil from 5-amino-6-(D-ribitylamino)uracil and L-tyrosine. In Methanococcoides burtonii (strain DSM 6242 / NBRC 107633 / OCM 468 / ACE-M), this protein is 5-amino-6-(D-ribitylamino)uracil--L-tyrosine 4-hydroxyphenyl transferase.